The chain runs to 309 residues: NAD kinase (309 aa).

Catalysis depends on D89, which acts as the Proton acceptor. NAD(+) contacts are provided by residues 89–90 (DG), 163–164 (NE), H174, R191, D193, and 204–209 (TAYSLS).

It belongs to the NAD kinase family. Requires a divalent metal cation as cofactor.

The protein resides in the cytoplasm. The catalysed reaction is NAD(+) + ATP = ADP + NADP(+) + H(+). Functionally, involved in the regulation of the intracellular balance of NAD and NADP, and is a key enzyme in the biosynthesis of NADP. Catalyzes specifically the phosphorylation on 2'-hydroxyl of the adenosine moiety of NAD to yield NADP. The protein is NAD kinase of Shewanella denitrificans (strain OS217 / ATCC BAA-1090 / DSM 15013).